Consider the following 72-residue polypeptide: Omega-conotoxin-like SVIA mutant 1 (72 aa).

Residues 1 to 22 (MKLTCVVIVAVLLLTACQLITA) form the signal peptide. A propeptide spanning residues 23–48 (EDSRGAQKHRTLRSTARRSKSELTTR) is cleaved from the precursor. 3 disulfide bridges follow: cysteine 49-cysteine 63, cysteine 56-cysteine 66, and cysteine 62-cysteine 71. Proline 55 bears the 4-hydroxyproline mark.

This sequence belongs to the conotoxin O1 superfamily. As to expression, expressed by the venom duct.

The protein localises to the secreted. Omega-conotoxins act at presynaptic membranes, they bind and block voltage-gated calcium channels (Cav). This is Omega-conotoxin-like SVIA mutant 1 from Conus striatus (Striated cone).